The chain runs to 220 residues: Glutamine amidotransferase-like class 1 domain-containing protein 1 (220 aa).

The signal sequence occupies residues 1-35; that stretch reads MASERLPSRPACLLVASGAAEGVSAQSFLHCFTLA. N-linked (GlcNAc...) asparagine glycans are attached at residues asparagine 57 and asparagine 201.

It belongs to the peptidase C56 family. In terms of assembly, homotetramer. Component of the FERRY complex composed of five subunits, TBCK, PPP1R21, FERRY3, CRYZL1 and GATD1 with a ratio of 1:2:1:2:4, respectively.

It localises to the secreted. The protein resides in the early endosome. In terms of biological role, component of the FERRY complex (Five-subunit Endosomal Rab5 and RNA/ribosome intermediary). The FERRY complex directly interacts with mRNAs and RAB5A, and functions as a RAB5A effector involved in the localization and the distribution of specific mRNAs most likely by mediating their endosomal transport. The complex recruits mRNAs and ribosomes to early endosomes through direct mRNA-interaction. This chain is Glutamine amidotransferase-like class 1 domain-containing protein 1, found in Bos taurus (Bovine).